The following is a 378-amino-acid chain: Putative glutamate--cysteine ligase 2 (378 aa).

It belongs to the glutamate--cysteine ligase type 2 family. YbdK subfamily.

The enzyme catalyses L-cysteine + L-glutamate + ATP = gamma-L-glutamyl-L-cysteine + ADP + phosphate + H(+). ATP-dependent carboxylate-amine ligase which exhibits weak glutamate--cysteine ligase activity. The polypeptide is Putative glutamate--cysteine ligase 2 (Bdellovibrio bacteriovorus (strain ATCC 15356 / DSM 50701 / NCIMB 9529 / HD100)).